We begin with the raw amino-acid sequence, 147 residues long: Acidic phospholipase A2 beta-bungarotoxin A4 chain (147 aa).

An N-terminal signal peptide occupies residues 1 to 19 (MNPAHLLVLSAVCVSLLGA). Positions 20–27 (ANIPPQHL) are excised as a propeptide. Cystine bridges form between cysteine 54–cysteine 146, cysteine 56–cysteine 72, cysteine 71–cysteine 127, cysteine 78–cysteine 120, cysteine 88–cysteine 113, and cysteine 106–cysteine 118. Ca(2+) contacts are provided by tyrosine 55, glycine 57, and glycine 59. Histidine 75 is an active-site residue. Aspartate 76 is a Ca(2+) binding site. The active site involves aspartate 121.

The protein belongs to the phospholipase A2 family. Group I subfamily. D49 sub-subfamily. In terms of assembly, heterodimer; disulfide-linked. The A chains have phospholipase A2 activity and the B chains show homology with the basic protease inhibitors. Ca(2+) serves as cofactor. As to expression, expressed by the venom gland.

Its subcellular location is the secreted. It carries out the reaction a 1,2-diacyl-sn-glycero-3-phosphocholine + H2O = a 1-acyl-sn-glycero-3-phosphocholine + a fatty acid + H(+). In terms of biological role, snake venom phospholipase A2 (PLA2) that inhibits neuromuscular transmission by blocking acetylcholine release from the nerve termini. PLA2 catalyzes the calcium-dependent hydrolysis of the 2-acyl groups in 3-sn-phosphoglycerides. This is Acidic phospholipase A2 beta-bungarotoxin A4 chain from Bungarus multicinctus (Many-banded krait).